A 98-amino-acid chain; its full sequence is Feather keratin 3 (98 aa).

The protein belongs to the avian keratin family. In terms of assembly, the avian keratins (F-ker, S-ker, C-ker and B-ker) are a complex mixture of very similar polypeptides.

The sequence is that of Feather keratin 3 from Gallus gallus (Chicken).